A 308-amino-acid polypeptide reads, in one-letter code: 4-hydroxy-3-methylbut-2-enyl diphosphate reductase (308 aa).

Cysteine 12 provides a ligand contact to [4Fe-4S] cluster. Residues histidine 41 and histidine 74 each contribute to the (2E)-4-hydroxy-3-methylbut-2-enyl diphosphate site. Dimethylallyl diphosphate contacts are provided by histidine 41 and histidine 74. The isopentenyl diphosphate site is built by histidine 41 and histidine 74. Position 96 (cysteine 96) interacts with [4Fe-4S] cluster. Histidine 124 serves as a coordination point for (2E)-4-hydroxy-3-methylbut-2-enyl diphosphate. Histidine 124 provides a ligand contact to dimethylallyl diphosphate. Histidine 124 contributes to the isopentenyl diphosphate binding site. Glutamate 126 functions as the Proton donor in the catalytic mechanism. Threonine 166 contributes to the (2E)-4-hydroxy-3-methylbut-2-enyl diphosphate binding site. Cysteine 196 is a binding site for [4Fe-4S] cluster. 4 residues coordinate (2E)-4-hydroxy-3-methylbut-2-enyl diphosphate: serine 224, serine 225, asparagine 226, and serine 268. The dimethylallyl diphosphate site is built by serine 224, serine 225, asparagine 226, and serine 268. Isopentenyl diphosphate contacts are provided by serine 224, serine 225, asparagine 226, and serine 268.

The protein belongs to the IspH family. It depends on [4Fe-4S] cluster as a cofactor.

It catalyses the reaction isopentenyl diphosphate + 2 oxidized [2Fe-2S]-[ferredoxin] + H2O = (2E)-4-hydroxy-3-methylbut-2-enyl diphosphate + 2 reduced [2Fe-2S]-[ferredoxin] + 2 H(+). The catalysed reaction is dimethylallyl diphosphate + 2 oxidized [2Fe-2S]-[ferredoxin] + H2O = (2E)-4-hydroxy-3-methylbut-2-enyl diphosphate + 2 reduced [2Fe-2S]-[ferredoxin] + 2 H(+). Its pathway is isoprenoid biosynthesis; dimethylallyl diphosphate biosynthesis; dimethylallyl diphosphate from (2E)-4-hydroxy-3-methylbutenyl diphosphate: step 1/1. It functions in the pathway isoprenoid biosynthesis; isopentenyl diphosphate biosynthesis via DXP pathway; isopentenyl diphosphate from 1-deoxy-D-xylulose 5-phosphate: step 6/6. In terms of biological role, catalyzes the conversion of 1-hydroxy-2-methyl-2-(E)-butenyl 4-diphosphate (HMBPP) into a mixture of isopentenyl diphosphate (IPP) and dimethylallyl diphosphate (DMAPP). Acts in the terminal step of the DOXP/MEP pathway for isoprenoid precursor biosynthesis. This chain is 4-hydroxy-3-methylbut-2-enyl diphosphate reductase, found in Vesicomyosocius okutanii subsp. Calyptogena okutanii (strain HA).